Consider the following 274-residue polypeptide: NADPH-dependent 7-cyano-7-deazaguanine reductase (274 aa).

Residue 80 to 82 coordinates substrate; it reads VES. 82-83 provides a ligand contact to NADPH; the sequence is SK. C181 acts as the Thioimide intermediate in catalysis. The Proton donor role is filled by D188. 220–221 contacts substrate; the sequence is HE. 249 to 250 is an NADPH binding site; it reads RG.

Belongs to the GTP cyclohydrolase I family. QueF type 2 subfamily. In terms of assembly, homodimer.

The protein resides in the cytoplasm. It carries out the reaction 7-aminomethyl-7-carbaguanine + 2 NADP(+) = 7-cyano-7-deazaguanine + 2 NADPH + 3 H(+). It participates in tRNA modification; tRNA-queuosine biosynthesis. In terms of biological role, catalyzes the NADPH-dependent reduction of 7-cyano-7-deazaguanine (preQ0) to 7-aminomethyl-7-deazaguanine (preQ1). The polypeptide is NADPH-dependent 7-cyano-7-deazaguanine reductase (Burkholderia pseudomallei (strain 1106a)).